Here is a 229-residue protein sequence, read N- to C-terminus: ATP synthase subunit a (229 aa).

A run of 6 helical transmembrane segments spans residues 25–45 (ADAV…SIAA), 82–102 (FFPL…IGLI), 104–124 (GFFP…VVFV), 142–162 (FLGP…IGHL), 181–201 (LVLI…MMLM), and 202–222 (GVLV…IYIQ).

Belongs to the ATPase A chain family. As to quaternary structure, F-type ATPases have 2 components, CF(1) - the catalytic core - and CF(0) - the membrane proton channel. CF(1) has five subunits: alpha(3), beta(3), gamma(1), delta(1), epsilon(1). CF(0) has three main subunits: a(1), b(2) and c(9-12). The alpha and beta chains form an alternating ring which encloses part of the gamma chain. CF(1) is attached to CF(0) by a central stalk formed by the gamma and epsilon chains, while a peripheral stalk is formed by the delta and b chains.

Its subcellular location is the cell inner membrane. Key component of the proton channel; it plays a direct role in the translocation of protons across the membrane. In Geobacter sp. (strain M21), this protein is ATP synthase subunit a.